Here is a 577-residue protein sequence, read N- to C-terminus: Heavy metal-associated isoprenylated plant protein 34 (577 aa).

Positions Leu9–Glu72 constitute an HMA domain. Cys20 and Cys23 together coordinate a metal cation. Over residues Gly77–Gly87 the composition is skewed to gly residues. Disordered regions lie at residues Gly77–Gln136 and Ala150–Gly451. Over residues Asn97–Pro106 the composition is skewed to low complexity. A compositionally biased stretch (gly residues) spans Lys118 to His129. Positions Lys168–Ala177 are enriched in basic and acidic residues. Residues Asp178–Glu213 are compositionally biased toward acidic residues. A compositionally biased stretch (low complexity) spans His227–Gly244. Gly residues-rich tracts occupy residues Gly245 to Lys254 and Phe266 to Phe281. 2 stretches are compositionally biased toward basic and acidic residues: residues Lys294–Ala326 and Asn344–Gly358. Gly residues-rich tracts occupy residues Lys379–Gly392 and Gly420–Gly451. Cys574 is subject to Cysteine methyl ester. Cys574 is lipidated: S-farnesyl cysteine. Positions Ser575 to Met577 are cleaved as a propeptide — removed in mature form.

Belongs to the HIPP family.

Heavy-metal-binding protein. The sequence is that of Heavy metal-associated isoprenylated plant protein 34 from Arabidopsis thaliana (Mouse-ear cress).